A 156-amino-acid polypeptide reads, in one-letter code: Small ribosomal subunit protein uS7 (156 aa).

It belongs to the universal ribosomal protein uS7 family. As to quaternary structure, part of the 30S ribosomal subunit. Contacts proteins S9 and S11.

One of the primary rRNA binding proteins, it binds directly to 16S rRNA where it nucleates assembly of the head domain of the 30S subunit. Is located at the subunit interface close to the decoding center, probably blocks exit of the E-site tRNA. The polypeptide is Small ribosomal subunit protein uS7 (Chlorobaculum tepidum (strain ATCC 49652 / DSM 12025 / NBRC 103806 / TLS) (Chlorobium tepidum)).